A 209-amino-acid chain; its full sequence is Large ribosomal subunit protein uL3 (209 aa).

Residue Gln150 is modified to N5-methylglutamine.

The protein belongs to the universal ribosomal protein uL3 family. Part of the 50S ribosomal subunit. Forms a cluster with proteins L14 and L19. Methylated by PrmB.

Functionally, one of the primary rRNA binding proteins, it binds directly near the 3'-end of the 23S rRNA, where it nucleates assembly of the 50S subunit. The sequence is that of Large ribosomal subunit protein uL3 from Cronobacter sakazakii (strain ATCC BAA-894) (Enterobacter sakazakii).